Consider the following 528-residue polypeptide: Extracellular serine/threonine protein CG31145 (528 aa).

Over 1 to 12 the chain is Cytoplasmic; that stretch reads MAVLRTMKLKER. Residues 1 to 76 constitute a propeptide that is removed on maturation; the sequence is MAVLRTMKLK…LHEFKRKFLQ (76 aa). A helical membrane pass occupies residues 13-33; that stretch reads LVISLGATLVLLTLLLIVDVQ. Residues 34–528 are Lumenal-facing; sequence MDFGVANRHL…VDGSETDVSS (495 aa). The disordered stretch occupies residues 77-130; the sequence is KSNASGSKEASTQAGASQSGGATSGQDAAAGASGGAAGPGTSRSTSTRKPTPHD. Residue N79 is glycosylated (N-linked (GlcNAc...) asparagine). A compositionally biased stretch (low complexity) spans 86 to 107; sequence ASTQAGASQSGGATSGQDAAAG. N173 carries an N-linked (GlcNAc...) asparagine glycan. The ATP site is built by Q220, K236, and E257. E257 lines the Mn(2+) pocket. Residue N286 is glycosylated (N-linked (GlcNAc...) asparagine). 2 disulfides stabilise this stretch: C312-C328 and C317-C321. ATP is bound at residue 339–342; that stretch reads AAFL. Cystine bridges form between C376-C450 and C451-C510. The active site involves D408. Residue E413 coordinates ATP. Residue N420 is glycosylated (N-linked (GlcNAc...) asparagine). ATP is bound at residue D428. Residue D428 participates in Mn(2+) binding.

This sequence belongs to the FAM20 family. It depends on Mn(2+) as a cofactor. In terms of tissue distribution, in embryos, prominently expressed in midline glia, salivary gland, intestine and dorsal vessel (heart). Not associated with biomineralization.

It is found in the golgi apparatus membrane. The protein resides in the secreted. The enzyme catalyses L-seryl-[protein] + ATP = O-phospho-L-seryl-[protein] + ADP + H(+). It catalyses the reaction L-threonyl-[protein] + ATP = O-phospho-L-threonyl-[protein] + ADP + H(+). Functionally, golgi serine/threonine protein kinase that phosphorylates secretory pathway proteins within Ser-x-Glu/pSer motifs. In Drosophila melanogaster (Fruit fly), this protein is Extracellular serine/threonine protein CG31145.